The chain runs to 209 residues: Probable calcium-binding protein CML36 (209 aa).

The disordered stretch occupies residues 22 to 59; it reads SKSPTAFSFGSASSSSGQDCKNSGGDGGGGSVTPTSIL. Over residues 27–38 the composition is skewed to low complexity; the sequence is AFSFGSASSSSG. 4 EF-hand domains span residues 66–101, 103–138, 139–174, and 176–209; these read YSYVEILQAFKLIDRDNDGAVSRHDLESLLSRLGPD, LTEEEINVMLKEVDCDGDGTIRLEELASRVVSLDPA, RDSTELKETFEFFDADRDGLISADELLRVFSTIGDE, and CTLDDCKRMIADVDEDGDGFVCFTEFSRMMDLQR. Residues Asp-79, Asp-81, Asp-83, and Asp-90 each coordinate Ca(2+). 8 residues coordinate Ca(2+): Asp-152, Asp-154, Asp-156, Glu-163, Asp-189, Asp-191, Asp-193, and Glu-200.

In terms of biological role, potential calcium sensor. The sequence is that of Probable calcium-binding protein CML36 (CML36) from Arabidopsis thaliana (Mouse-ear cress).